The chain runs to 107 residues: ATP-dependent Clp protease adapter protein ClpS (107 aa).

It belongs to the ClpS family. In terms of assembly, binds to the N-terminal domain of the chaperone ClpA.

Its function is as follows. Involved in the modulation of the specificity of the ClpAP-mediated ATP-dependent protein degradation. The protein is ATP-dependent Clp protease adapter protein ClpS of Acinetobacter baylyi (strain ATCC 33305 / BD413 / ADP1).